Reading from the N-terminus, the 450-residue chain is Plasmepsin VII (450 aa).

A signal peptide spans 1 to 24 (MNKNIIQIYLFVFILLLKQHIVIL). The Peptidase A1 domain maps to 92–441 (YYGEVQIGEQ…DKDNLKIGFV (350 aa)). Active-site residues include D111 and D324.

The protein belongs to the peptidase A1 family.

The protein resides in the cytoplasm. This chain is Plasmepsin VII, found in Plasmodium falciparum (isolate NF54).